The following is a 232-amino-acid chain: 2-C-methyl-D-erythritol 4-phosphate cytidylyltransferase (232 aa).

It belongs to the IspD/TarI cytidylyltransferase family. IspD subfamily.

The catalysed reaction is 2-C-methyl-D-erythritol 4-phosphate + CTP + H(+) = 4-CDP-2-C-methyl-D-erythritol + diphosphate. It functions in the pathway isoprenoid biosynthesis; isopentenyl diphosphate biosynthesis via DXP pathway; isopentenyl diphosphate from 1-deoxy-D-xylulose 5-phosphate: step 2/6. Its function is as follows. Catalyzes the formation of 4-diphosphocytidyl-2-C-methyl-D-erythritol from CTP and 2-C-methyl-D-erythritol 4-phosphate (MEP). This Vibrio cholerae serotype O1 (strain ATCC 39315 / El Tor Inaba N16961) protein is 2-C-methyl-D-erythritol 4-phosphate cytidylyltransferase.